We begin with the raw amino-acid sequence, 2472 residues long: Centrosomal protein of 290 kDa (2472 aa).

The self-association (with itself or C-terminus) stretch occupies residues 1–689 (MPPNIKWKEL…MESKNAEGIF (689 aa)). Coiled-coil stretches lie at residues 59–747 (MKMK…LRQS), 1129–1392 (RQRI…QQSK), and 1459–1492 (QVIL…ILSR). The disordered stretch occupies residues 128 to 164 (DRELEDMEKELDKEKKVNEQLALRNEEAENENSKLRR). Residues 137–164 (ELDKEKKVNEQLALRNEEAENENSKLRR) show a composition bias toward basic and acidic residues. Residues 690–890 (DASLHLKAQV…TVLQVNEKSL (201 aa)) form an interaction with IQCB1 region. Disordered regions lie at residues 1691 to 1713 (AHKD…SRAP) and 2451 to 2472 (PSPL…FPIY). A compositionally biased stretch (polar residues) spans 1697 to 1713 (SLKSELQAQKEANSRAP). Positions 1960–2472 (TTGMTVDQVL…GESPHSFPIY (513 aa)) are self-association (with itself or N-terminus).

In terms of assembly, part of the tectonic-like complex (also named B9 complex). Interacts with ATF4 via its N-terminal region. Associates with the BBSome complex, interacting (via N-terminus) with BBS4. Interacts with IQCB1/NPHP5; IQCB1 and CEP290/NPHP6 are proposed to form a functional NPHP5-6 module localized to the centrosome. Interacts with NPHP4; the interaction likely requires additional interactors. Interacts with ZNF423, FAM161A, CEP162, CEP162, CEP131, TALPID3, CCDC13, CC2D2A, RPGRIP1. Can self-associate (homo- or heteromeric). Interacts with CCP110; required for suppressing cilia formation. Interacts with RPGR. Associates (via C-terminus) with microtubules; association to microtubule is reduced in response to cellular stress, such as ultraviolet light (UV) radiation or heat shock, in a process that requires p38 MAP kinase signaling. Interacts with FAM161A. Interacts with PCM1. Interacts with CCDC66. Interacts with ARMC9 and CSPP1. In terms of processing, ubiquitinated. May undergo monoubiquitination; monoubiquitination is inhibited in response to cellular stress, such as ultraviolet light (UV) radiation or heat shock, but does not cause its displacement from centriolar satellites. Expressed in multiple organs during early postnatal development, with highest levels in hindbrain.

It is found in the cytoplasm. It localises to the cytoskeleton. The protein resides in the microtubule organizing center. Its subcellular location is the centrosome. The protein localises to the centriolar satellite. It is found in the nucleus. It localises to the centriole. The protein resides in the cell projection. Its subcellular location is the cilium. The protein localises to the cilium basal body. It is found in the cytoplasmic vesicle. Its function is as follows. Involved in early and late steps in cilia formation. Its association with CCP110 is required for inhibition of primary cilia formation by CCP110. May play a role in early ciliogenesis in the disappearance of centriolar satellites and in the transition of primary ciliar vesicles (PCVs) to capped ciliary vesicles (CCVs). Required for the centrosomal recruitment of RAB8A and for the targeting of centriole satellite proteins to centrosomes such as of PCM1. Required for the correct localization of ciliary and phototransduction proteins in retinal photoreceptor cells; may play a role in ciliary transport processes. Required for efficient recruitment of RAB8A to primary cilium. In the ciliary transition zone is part of the tectonic-like complex (also named B9 complex) which is required for tissue-specific ciliogenesis and may regulate ciliary membrane composition. Involved in regulation of the BBSome complex integrity, specifically for presence of BBS2, BBS5 and BBS8/TTC8 in the complex, and in ciliary targeting of selected BBSome cargos. May play a role in controlling entry of the BBSome complex to cilia possibly implicating IQCB1/NPHP5. Activates ATF4-mediated transcription. In Mus musculus (Mouse), this protein is Centrosomal protein of 290 kDa.